Consider the following 301-residue polypeptide: Chitin deacetylase 1 (301 aa).

The first 24 residues, 1–24, serve as a signal peptide directing secretion; it reads MKIFNTIQSVLFAAFFLKQGNCLA. N-linked (GlcNAc...) asparagine glycans are attached at residues N26, N50, and N68. A disulfide bridge links C107 with C290. In terms of domain architecture, NodB homology spans 108-288; the sequence is FKLSQTFDDG…LIGSDQLTIA (181 aa). D115 serves as the catalytic Proton acceptor. D115 lines the acetate pocket. The Co(2+) site is built by D116, H162, and H166. N-linked (GlcNAc...) asparagine glycosylation occurs at N189. Y203 contacts acetate. Catalysis depends on H263, which acts as the Proton donor.

The protein belongs to the polysaccharide deacetylase family. The cofactor is Co(2+).

The protein resides in the prospore. The enzyme catalyses [(1-&gt;4)-N-acetyl-beta-D-glucosaminyl](n) + n H2O = chitosan + n acetate. In terms of biological role, hydrolyzes the N-acetamido groups of N-acetyl-D-glucosamine residues in chitin to form chitosan and acetate. Chitosan is a component of the spore wall. The sequence is that of Chitin deacetylase 1 from Saccharomyces cerevisiae (strain ATCC 204508 / S288c) (Baker's yeast).